Here is a 176-residue protein sequence, read N- to C-terminus: Isopentenyl-diphosphate Delta-isomerase (176 aa).

Positions 22 and 28 each coordinate Mn(2+). Positions 26–160 (LRHKAVSVFV…PERYTPWLRI (135 aa)) constitute a Nudix hydrolase domain. Cys62 is an active-site residue. His64 serves as a coordination point for Mn(2+). Glu82 lines the Mg(2+) pocket. Mn(2+) is bound by residues Glu108 and Glu110. Glu110 is an active-site residue.

The protein belongs to the IPP isomerase type 1 family. Mg(2+) serves as cofactor. Mn(2+) is required as a cofactor.

Its subcellular location is the cytoplasm. The enzyme catalyses isopentenyl diphosphate = dimethylallyl diphosphate. It functions in the pathway isoprenoid biosynthesis; dimethylallyl diphosphate biosynthesis; dimethylallyl diphosphate from isopentenyl diphosphate: step 1/1. The protein operates within porphyrin-containing compound metabolism; chlorophyll biosynthesis. In terms of biological role, catalyzes the 1,3-allylic rearrangement of the homoallylic substrate isopentenyl (IPP) to its highly electrophilic allylic isomer, dimethylallyl diphosphate (DMAPP). This Dinoroseobacter shibae (strain DSM 16493 / NCIMB 14021 / DFL 12) protein is Isopentenyl-diphosphate Delta-isomerase.